A 529-amino-acid chain; its full sequence is Peptide chain release factor 3 (529 aa).

Residues A11–M280 form the tr-type G domain. Residues S20 to T27, D88 to H92, and N142 to D145 each bind GTP.

This sequence belongs to the TRAFAC class translation factor GTPase superfamily. Classic translation factor GTPase family. PrfC subfamily.

Its subcellular location is the cytoplasm. Its function is as follows. Increases the formation of ribosomal termination complexes and stimulates activities of RF-1 and RF-2. It binds guanine nucleotides and has strong preference for UGA stop codons. It may interact directly with the ribosome. The stimulation of RF-1 and RF-2 is significantly reduced by GTP and GDP, but not by GMP. The sequence is that of Peptide chain release factor 3 from Enterobacter sp. (strain 638).